Reading from the N-terminus, the 501-residue chain is MMITLFTLAVVSIGFFLWWLLTVQPAVTKRALKHIPELRFEDNDTPERYTQDSRSLLFRGYDKYLRHGIPFQMRHPIEELGPQVLLPMKYLDEVKYASTSLFSFPLFSEKVFLLNYSNAPRQTDAAAHVVRVDLTKNLGALANGMYQEAIEGLNQSLSASEEWNTLPAYDFLSSLTAQVTALALVGPELCRNREWIDISLQTTFAIFNAAFTIRSQYSPRWRWLARWQSDAPKRMRAMRARAVELLAPVYQDRLAAIKEHDFGAFADCLHWSLRGNGGETSLTRIAEQQLFLTVASMHTTSSTLTAVLFDLLIRPEYCAEITKEMQEALTECEGKWTLQEVAKMRKLDSFMKESQRVHPIGFITAQRMTVRPHTFKDGLHLPAGVIFQFPADAVHHDPAIYPRPDQFAGYRFLHLRETVDANRYHFASVSDTMLGFGAGSHACPGRFFTSLAIKLILVVLLTQYEVKLADCDGSRPANGFNDFNMGPSREATIMIRKRSGL.

The signal sequence occupies residues Met-1–Thr-28. 2 N-linked (GlcNAc...) asparagine glycosylation sites follow: Asn-115 and Asn-154. Residue Cys-443 participates in heme binding.

This sequence belongs to the cytochrome P450 family. Requires heme as cofactor.

It functions in the pathway mycotoxin biosynthesis. Functionally, cytochrome P450 monooxygenase; part of the gene cluster that mediates the biosynthesis of a family of the mycotoxins cytochalasins E and K. The hybrid PKS-NRPS synthetase ccsA and the enoyl reductase ccsC are responsible for fusion of phenylalanine with an octaketide backbone and subsequent release of the stable tetramic acid precursor. The polyketide synthase module (PKS) of the PKS-NRPS ccsA is responsible for the synthesis of the octaketide backbone. The downstream nonribosomal peptide synthetase (NRPS) amidates the carboxyl end of the octaketide with a phenylalanine. A reductase-like domain (R) at the C-terminus catalyzes the reductive release of the polyketide-amino acid intermediate. Because ccsA lacks a designated enoylreductase (ER) domain, the required activity is provided the enoyl reductase ccsC. Upon formation of the 11-membered carbocycle-fused perhydroisoindolone intermediate, a number of oxidative steps are required to afford the final cytochalasin E and K, including two hydroxylations at C17 and C18, one alcohol oxidation at C17, one epoxidation at C6 and C7 and two Baeyer-Villiger oxidations. The oxidative modification at C17, C18 and the C6-C7 epoxidation are likely to be catalyzed by the two cytochrome P450 oxygenases ccsD and ccsG. CcsD may be responsible for the epoxidation of the C6-C7 double bond. CcsG may be responsible for the successive oxidative modifications at C17 and C18. The double Baeyer-Villiger oxidations of ketocytochalasin to precytochalasin and cytochalasin Z(16) are among the final steps leading to cytochalasin E and K and are catalyzed by ccsB. The first oxygen insertion step follows that of the classic BVMO mechanism, generating the ester precytochalasin. Release of precytochalasin into an aqueous environment can generate the shunt product iso-precytochalasin through spontaneous isomerization. Alternatively, precytochalasin can undergo further oxidation by ccsB to yield the in-line carbonate-containing cytochalasin Z(16). Cytochalasin Z(16) is a precursor to cytochalasin E and cytochalasin K, whereas iso-precytochalasin is a precursor to cytochalasin Z(17) and rosellichalasin. The hydrolyase ccsE may catalyze hydrolysis of epoxide bond in cytochalasin E to afford cytochalasin K. The function of ccsF has not been assigned but it may play a role in post-PKS-NRPS biosynthetic step, resistance or transport of cytochalasins and related PKS-NRPS products. In Aspergillus clavatus (strain ATCC 1007 / CBS 513.65 / DSM 816 / NCTC 3887 / NRRL 1 / QM 1276 / 107), this protein is Cytochrome P450 monooxygenase ccsG.